A 416-amino-acid polypeptide reads, in one-letter code: Squalene synthase (416 aa).

R52 and R77 together coordinate NADP(+). D80, E83, and D84 together coordinate Mg(2+). R218 contacts NADP(+). The chain crosses the membrane as a helical span at residues 284–304; that stretch reads SVFNFCAIPQVMAIATLAACY. Residues K315 and R317 each contribute to the NADP(+) site. A helical transmembrane segment spans residues 384 to 404; that stretch reads PIYLSFIMLLAALSWQYLSTL.

The protein belongs to the phytoene/squalene synthase family. Mg(2+) is required as a cofactor.

Its subcellular location is the endoplasmic reticulum membrane. The catalysed reaction is 2 (2E,6E)-farnesyl diphosphate + NADPH + H(+) = squalene + 2 diphosphate + NADP(+). The enzyme catalyses 2 (2E,6E)-farnesyl diphosphate + NADH + H(+) = squalene + 2 diphosphate + NAD(+). It carries out the reaction presqualene diphosphate + NADH + H(+) = squalene + diphosphate + NAD(+). It catalyses the reaction presqualene diphosphate + NADPH + H(+) = squalene + diphosphate + NADP(+). The catalysed reaction is 2 (2E,6E)-farnesyl diphosphate = presqualene diphosphate + diphosphate. The protein operates within terpene metabolism; lanosterol biosynthesis; lanosterol from farnesyl diphosphate: step 1/3. Catalyzes the condensation of 2 farnesyl pyrophosphate (FPP) moieties to form squalene. Proceeds in two distinct steps. In the first half-reaction, two molecules of FPP react to form the stable presqualene diphosphate intermediate (PSQPP), with concomitant release of a proton and a molecule of inorganic diphosphate. In the second half-reaction, PSQPP undergoes heterolysis, isomerization, and reduction with NADPH or NADH to form squalene. It is the first committed enzyme of the sterol biosynthesis pathway. The chain is Squalene synthase (Fdft1) from Rattus norvegicus (Rat).